The chain runs to 218 residues: MVEEQLSLSGVEEIAPKIETPKIEKRTVKERRQQVLTVLIHMLHSERGMERMTTARLAKEVGVSEAALYRYFPSKTKMFEALIEHIESTLLSRITASMRNETQTMNRIHDILQTILDFARKNPGLTRVLTGHALMFEEAQLQARVAQFFDRLEMQFVNILQMRKLREGRAFNVDERIIASHLVTLCEGQFMRYVRTNFRLNSSQSFEQQWRFIEPLFA.

In terms of domain architecture, HTH tetR-type spans 30–90 (ERRQQVLTVL…ALIEHIESTL (61 aa)). The segment at residues 53 to 72 (TTARLAKEVGVSEAALYRYF) is a DNA-binding region (H-T-H motif).

It belongs to the nucleoid occlusion factor SlmA family. In terms of assembly, homodimer. Interacts with FtsZ.

The protein localises to the cytoplasm. It localises to the nucleoid. In terms of biological role, required for nucleoid occlusion (NO) phenomenon, which prevents Z-ring formation and cell division over the nucleoid. Acts as a DNA-associated cell division inhibitor that binds simultaneously chromosomal DNA and FtsZ, and disrupts the assembly of FtsZ polymers. SlmA-DNA-binding sequences (SBS) are dispersed on non-Ter regions of the chromosome, preventing FtsZ polymerization at these regions. The sequence is that of Nucleoid occlusion factor SlmA from Haemophilus influenzae (strain PittGG).